The following is a 246-amino-acid chain: Large ribosomal subunit protein uL3 (246 aa).

Disordered stretches follow at residues 140 to 162 and 214 to 246; these read SHRSIGSTGGRQDPGKTFKNKKM and ADVPLPGKFRENGSAGASQIEAAPEAPASEENA. Gln151 is subject to N5-methylglutamine. Positions 234 to 246 are enriched in low complexity; it reads EAAPEAPASEENA.

The protein belongs to the universal ribosomal protein uL3 family. In terms of assembly, part of the 50S ribosomal subunit. Forms a cluster with proteins L14 and L19. Methylated by PrmB.

One of the primary rRNA binding proteins, it binds directly near the 3'-end of the 23S rRNA, where it nucleates assembly of the 50S subunit. This Methylorubrum extorquens (strain CM4 / NCIMB 13688) (Methylobacterium extorquens) protein is Large ribosomal subunit protein uL3.